A 269-amino-acid chain; its full sequence is Glutamate racemase (269 aa).

Substrate is bound by residues 14–15 (DS) and 46–47 (YS). Residue C78 is the Proton donor/acceptor of the active site. 79–80 (NT) provides a ligand contact to substrate. Residue C189 is the Proton donor/acceptor of the active site. Position 190–191 (190–191 (TH)) interacts with substrate.

It belongs to the aspartate/glutamate racemases family.

The enzyme catalyses L-glutamate = D-glutamate. The protein operates within cell wall biogenesis; peptidoglycan biosynthesis. In terms of biological role, provides the (R)-glutamate required for cell wall biosynthesis. In Haemophilus influenzae (strain PittGG), this protein is Glutamate racemase.